Reading from the N-terminus, the 262-residue chain is L-aspartate dehydrogenase (262 aa).

Residues alanine 128 and asparagine 183 each contribute to the NAD(+) site. Histidine 213 is a catalytic residue.

The protein belongs to the L-aspartate dehydrogenase family.

The catalysed reaction is L-aspartate + NADP(+) + H2O = oxaloacetate + NH4(+) + NADPH + H(+). The enzyme catalyses L-aspartate + NAD(+) + H2O = oxaloacetate + NH4(+) + NADH + H(+). It participates in cofactor biosynthesis; NAD(+) biosynthesis; iminoaspartate from L-aspartate (dehydrogenase route): step 1/1. Functionally, specifically catalyzes the NAD or NADP-dependent dehydrogenation of L-aspartate to iminoaspartate. This Methanopyrus kandleri (strain AV19 / DSM 6324 / JCM 9639 / NBRC 100938) protein is L-aspartate dehydrogenase.